We begin with the raw amino-acid sequence, 448 residues long: N-succinylarginine dihydrolase (448 aa).

Substrate contacts are provided by residues 19–28 (GGLSYGNVAS), Asn-110, and 137–138 (HR). Glu-174 is an active-site residue. Arg-214 contacts substrate. The active site involves His-250. The substrate site is built by Asp-252 and Asn-365. Cys-371 serves as the catalytic Nucleophile.

It belongs to the succinylarginine dihydrolase family. Homodimer.

It carries out the reaction N(2)-succinyl-L-arginine + 2 H2O + 2 H(+) = N(2)-succinyl-L-ornithine + 2 NH4(+) + CO2. It participates in amino-acid degradation; L-arginine degradation via AST pathway; L-glutamate and succinate from L-arginine: step 2/5. Its function is as follows. Catalyzes the hydrolysis of N(2)-succinylarginine into N(2)-succinylornithine, ammonia and CO(2). In Pseudomonas aeruginosa (strain LESB58), this protein is N-succinylarginine dihydrolase.